The sequence spans 240 residues: uncharacterized protein (240 aa).

2 disordered regions span residues 125-148 (RRLD…EDVD) and 177-240 (DESN…RKSR). Positions 130-148 (SSEDGEEEEENDYIDEDVD) are enriched in acidic residues. A compositionally biased stretch (basic and acidic residues) spans 192–203 (SPRKSHIDHDFV). Acidic residues predominate over residues 204 to 217 (IPEDEMLSEEEEQE). The residue at position 231 (serine 231) is a Phosphoserine.

The protein belongs to the UTP5 family.

The protein resides in the cytoplasm. It is found in the nucleus. This is an uncharacterized protein from Schizosaccharomyces pombe (strain 972 / ATCC 24843) (Fission yeast).